The sequence spans 193 residues: Ion-translocating oxidoreductase complex subunit A (193 aa).

The next 6 membrane-spanning stretches (helical) occupy residues 5–25 (LLLL…FLGL), 39–59 (IGMS…SYLV), 72–92 (LTTM…EMVV), 102–122 (LLGI…VALL), 134–154 (IIYG…FSAM), and 171–191 (AIAM…TGLV).

It belongs to the NqrDE/RnfAE family. In terms of assembly, the complex is composed of six subunits: RnfA, RnfB, RnfC, RnfD, RnfE and RnfG.

Its subcellular location is the cell inner membrane. Functionally, part of a membrane-bound complex that couples electron transfer with translocation of ions across the membrane. The sequence is that of Ion-translocating oxidoreductase complex subunit A from Colwellia psychrerythraea (strain 34H / ATCC BAA-681) (Vibrio psychroerythus).